We begin with the raw amino-acid sequence, 481 residues long: ADAMTS-like protein 5 (481 aa).

An N-terminal signal peptide occupies residues 1 to 42; sequence MGKLRPGRVEWLASGHTERPHLFQNLLLFLWALLNCGLGVSA. The region spanning 45–97 is the TSP type-1 domain; that stretch reads PGEWTPWVSWTRCSSSCGRGVSVRSRRCLRLPGEEPCWGDSHEYRLCQLPDCP. 3 cysteine pairs are disulfide-bonded: cysteine 57/cysteine 91, cysteine 61/cysteine 96, and cysteine 72/cysteine 81. N-linked (GlcNAc...) asparagine glycosylation occurs at asparagine 218. Residues 331-361 form a disordered region; it reads QPQPRGVEPQPPAAPAVTPAQTPTLAPDPCP. Positions 345–355 are enriched in low complexity; that stretch reads PAVTPAQTPTL. 3 disulfides stabilise this stretch: cysteine 360-cysteine 425, cysteine 363-cysteine 427, and cysteine 377-cysteine 479. Residues 360-479 enclose the NTR domain; that stretch reads CPPCPDTRGR…SRIRLTARRC (120 aa).

In terms of assembly, interacts with heparin, FBN1 and FBN2. Proteolytically cleaved to release a C-terminal fragment containing the NTR domain. Post-translationally, contains at least one additional N-linked glycosylation site.

The protein resides in the secreted. It localises to the extracellular space. The protein localises to the extracellular matrix. May play a role in modulation of fibrillin microfibrils in the extracellular matrix (ECM). The sequence is that of ADAMTS-like protein 5 (ADAMTSL5) from Homo sapiens (Human).